A 257-amino-acid chain; its full sequence is Protein YIPF5 (257 aa).

The Cytoplasmic segment spans residues 1-124 (MSGFENLNTD…KVADGSIMNE (124 aa)). The tract at residues 75 to 106 (PASPQPFYGNNFEDEPPLLEELGINFDHIWQK) is interaction with Sec23. Residues 125 to 145 (TDLAGPMVFCLAFGATLLLAG) form a helical membrane-spanning segment. A topological domain (lumenal) is located at residue Lys-146. Residues 147-167 (IQFGYVYGISAIGCLGMFCLL) form a helical membrane-spanning segment. Residues 168-173 (NLMSMT) lie on the Cytoplasmic side of the membrane. The chain crosses the membrane as a helical span at residues 174-194 (GVSFGCVASVLGYCLLPMILL). Topologically, residues 195–196 (SS) are lumenal. The chain crosses the membrane as a helical span at residues 197–217 (FAVIFSLQGMVGIILTAGIIG). At 218 to 236 (WCSFSASKIFISALAMEGQ) the chain is on the cytoplasmic side. Residues 237–257 (QLLVAYPCALLYGVFALISVF) form a helical membrane-spanning segment.

This sequence belongs to the YIP1 family. As to quaternary structure, interacts with the COPII coat components Sec23 (SEC23A and/or SEC23B) and Sec24 (SEC24A and/or SEC24B). Interacts with YIF1A. May interact with RAB1A. Interacts with YIPF3 and YIPF4. Ubiquitously expressed with abundant expression in pancreatic tissue, islets, beta cells, and brain. Highly expressed in coronary smooth muscles.

It is found in the endoplasmic reticulum membrane. The protein resides in the golgi apparatus. The protein localises to the cis-Golgi network membrane. It localises to the cytoplasmic vesicle. Its subcellular location is the COPII-coated vesicle. In terms of biological role, plays a role in transport between endoplasmic reticulum and Golgi. In pancreatic beta cells, required to transport proinsulin from endoplasmic reticulum into the Golgi. The protein is Protein YIPF5 of Homo sapiens (Human).